The following is a 354-amino-acid chain: Histidinol-phosphate aminotransferase (354 aa).

Lysine 210 carries the N6-(pyridoxal phosphate)lysine modification.

It belongs to the class-II pyridoxal-phosphate-dependent aminotransferase family. Histidinol-phosphate aminotransferase subfamily. In terms of assembly, homodimer. It depends on pyridoxal 5'-phosphate as a cofactor.

It carries out the reaction L-histidinol phosphate + 2-oxoglutarate = 3-(imidazol-4-yl)-2-oxopropyl phosphate + L-glutamate. It functions in the pathway amino-acid biosynthesis; L-histidine biosynthesis; L-histidine from 5-phospho-alpha-D-ribose 1-diphosphate: step 7/9. This Clostridium botulinum (strain Okra / Type B1) protein is Histidinol-phosphate aminotransferase.